Consider the following 135-residue polypeptide: Large ribosomal subunit protein mL54 (135 aa).

The transit peptide at 1 to 14 directs the protein to the mitochondrion; the sequence is MAAAHLLRASRVWA.

This sequence belongs to the mitochondrion-specific ribosomal protein mL54 family. In terms of assembly, component of the mitochondrial ribosome large subunit (39S) which comprises a 16S rRNA and about 50 distinct proteins.

The protein resides in the mitochondrion. This is Large ribosomal subunit protein mL54 (Mrpl54) from Mus musculus (Mouse).